Here is a 428-residue protein sequence, read N- to C-terminus: Glutamate-1-semialdehyde 2,1-aminomutase (428 aa).

An N6-(pyridoxal phosphate)lysine modification is found at lysine 265.

The protein belongs to the class-III pyridoxal-phosphate-dependent aminotransferase family. HemL subfamily. Homodimer. Pyridoxal 5'-phosphate is required as a cofactor.

It is found in the cytoplasm. It catalyses the reaction (S)-4-amino-5-oxopentanoate = 5-aminolevulinate. It participates in porphyrin-containing compound metabolism; protoporphyrin-IX biosynthesis; 5-aminolevulinate from L-glutamyl-tRNA(Glu): step 2/2. In Shewanella woodyi (strain ATCC 51908 / MS32), this protein is Glutamate-1-semialdehyde 2,1-aminomutase.